A 202-amino-acid chain; its full sequence is Probable 1-Cys peroxiredoxin (202 aa).

The 148-residue stretch at 1–148 (STHGKIRIHD…VVRAVDSLLT (148 aa)) folds into the Thioredoxin domain. C30 functions as the Cysteine sulfenic acid (-SOH) intermediate in the catalytic mechanism. Residues 178 to 201 (KKLFPQGFETKDLPSKKGYLRFTK) carry the Bipartite nuclear localization signal motif.

The protein belongs to the peroxiredoxin family. Prx6 subfamily. As to expression, embryos.

It is found in the nucleus. The protein localises to the cytoplasm. It catalyses the reaction a hydroperoxide + [thioredoxin]-dithiol = an alcohol + [thioredoxin]-disulfide + H2O. In terms of biological role, thiol-specific peroxidase that catalyzes the reduction of hydrogen peroxide and organic hydroperoxides to water and alcohols, respectively. Seems to contribute to the inhibition of germination during stress. The sequence is that of Probable 1-Cys peroxiredoxin from Bromus secalinus (Rye brome).